We begin with the raw amino-acid sequence, 57 residues long: Andropin (57 aa).

Residues 1-23 (MKYFVVLVVLALILAISVGPSDA) form the signal peptide.

It belongs to the andropin family. As to expression, ejaculatory duct of adult males.

It is found in the secreted. Its function is as follows. Male-specific peptide with moderate activity against Gram-positive bacteria. This is Andropin (Anp) from Drosophila melanogaster (Fruit fly).